Consider the following 171-residue polypeptide: 3-hydroxydecanoyl-[acyl-carrier-protein] dehydratase (171 aa).

The active site involves His71.

This sequence belongs to the thioester dehydratase family. FabA subfamily. As to quaternary structure, homodimer.

It is found in the cytoplasm. It carries out the reaction a (3R)-hydroxyacyl-[ACP] = a (2E)-enoyl-[ACP] + H2O. The catalysed reaction is (3R)-hydroxydecanoyl-[ACP] = (2E)-decenoyl-[ACP] + H2O. The enzyme catalyses (2E)-decenoyl-[ACP] = (3Z)-decenoyl-[ACP]. It participates in lipid metabolism; fatty acid biosynthesis. Necessary for the introduction of cis unsaturation into fatty acids. Catalyzes the dehydration of (3R)-3-hydroxydecanoyl-ACP to E-(2)-decenoyl-ACP and then its isomerization to Z-(3)-decenoyl-ACP. Can catalyze the dehydratase reaction for beta-hydroxyacyl-ACPs with saturated chain lengths up to 16:0, being most active on intermediate chain length. This chain is 3-hydroxydecanoyl-[acyl-carrier-protein] dehydratase, found in Sinorhizobium fredii (strain NBRC 101917 / NGR234).